Reading from the N-terminus, the 284-residue chain is MSAQLINGKEVSQKRLQAVAEAVAQRQQDNLHMPCLAVVLVGGDPASAVYVRNKKTACQKCGIKSLSYELPESTSQEELLALVDRLNADSEVDGILVQLPLPKHLDSQAVLERISPDKDVDGFHPYNVGRLAVKMPLMRPCTPKGVMTLLEAYGIDPKGKKAVVVGASNIVGRPQALELLLARATVTVCHSATENLADEVAGADILVVGVGIPNFVKGEWIKPGAVVIDVGINRLDDGSLCGDVEFETAKERAAMITPVPGGVGPMTIATLMENTLHAASLHDA.

NADP(+) is bound by residues 166-168, serine 191, and isoleucine 232; that span reads GAS.

This sequence belongs to the tetrahydrofolate dehydrogenase/cyclohydrolase family. In terms of assembly, homodimer.

The enzyme catalyses (6R)-5,10-methylene-5,6,7,8-tetrahydrofolate + NADP(+) = (6R)-5,10-methenyltetrahydrofolate + NADPH. The catalysed reaction is (6R)-5,10-methenyltetrahydrofolate + H2O = (6R)-10-formyltetrahydrofolate + H(+). It participates in one-carbon metabolism; tetrahydrofolate interconversion. Its function is as follows. Catalyzes the oxidation of 5,10-methylenetetrahydrofolate to 5,10-methenyltetrahydrofolate and then the hydrolysis of 5,10-methenyltetrahydrofolate to 10-formyltetrahydrofolate. This chain is Bifunctional protein FolD, found in Neisseria meningitidis serogroup C (strain 053442).